The following is a 245-amino-acid chain: Large ribosomal subunit protein uL2 (245 aa).

Residues 196 to 226 (SPYAHPHGGGSHQKGGTPVSKTAPPGQKVGF) are disordered.

This sequence belongs to the universal ribosomal protein uL2 family. In terms of assembly, part of the 50S ribosomal subunit. Forms a bridge to the 30S subunit in the 70S ribosome.

One of the primary rRNA binding proteins. Required for association of the 30S and 50S subunits to form the 70S ribosome, for tRNA binding and peptide bond formation. It has been suggested to have peptidyltransferase activity; this is somewhat controversial. Makes several contacts with the 16S rRNA in the 70S ribosome. In Pyrobaculum neutrophilum (strain DSM 2338 / JCM 9278 / NBRC 100436 / V24Sta) (Thermoproteus neutrophilus), this protein is Large ribosomal subunit protein uL2.